We begin with the raw amino-acid sequence, 131 residues long: Ribosome-binding factor A (131 aa).

This sequence belongs to the RbfA family. Monomer. Binds 30S ribosomal subunits, but not 50S ribosomal subunits or 70S ribosomes.

It localises to the cytoplasm. Its function is as follows. One of several proteins that assist in the late maturation steps of the functional core of the 30S ribosomal subunit. Associates with free 30S ribosomal subunits (but not with 30S subunits that are part of 70S ribosomes or polysomes). Required for efficient processing of 16S rRNA. May interact with the 5'-terminal helix region of 16S rRNA. The protein is Ribosome-binding factor A of Thermotoga maritima (strain ATCC 43589 / DSM 3109 / JCM 10099 / NBRC 100826 / MSB8).